We begin with the raw amino-acid sequence, 407 residues long: Multifunctional CCA protein (407 aa).

Positions 8 and 11 each coordinate ATP. Positions 8 and 11 each coordinate CTP. Mg(2+) is bound by residues aspartate 21 and aspartate 23. Positions 91, 137, and 140 each coordinate ATP. CTP is bound by residues arginine 91, arginine 137, and arginine 140. Residues 228–329 form the HD domain; sequence TGVHALMALA…VALFDRVDAW (102 aa).

Belongs to the tRNA nucleotidyltransferase/poly(A) polymerase family. Bacterial CCA-adding enzyme type 1 subfamily. Monomer. Can also form homodimers and oligomers. Mg(2+) serves as cofactor. The cofactor is Ni(2+).

It catalyses the reaction a tRNA precursor + 2 CTP + ATP = a tRNA with a 3' CCA end + 3 diphosphate. The catalysed reaction is a tRNA with a 3' CCA end + 2 CTP + ATP = a tRNA with a 3' CCACCA end + 3 diphosphate. Catalyzes the addition and repair of the essential 3'-terminal CCA sequence in tRNAs without using a nucleic acid template. Adds these three nucleotides in the order of C, C, and A to the tRNA nucleotide-73, using CTP and ATP as substrates and producing inorganic pyrophosphate. tRNA 3'-terminal CCA addition is required both for tRNA processing and repair. Also involved in tRNA surveillance by mediating tandem CCA addition to generate a CCACCA at the 3' terminus of unstable tRNAs. While stable tRNAs receive only 3'-terminal CCA, unstable tRNAs are marked with CCACCA and rapidly degraded. The polypeptide is Multifunctional CCA protein (Erwinia tasmaniensis (strain DSM 17950 / CFBP 7177 / CIP 109463 / NCPPB 4357 / Et1/99)).